A 653-amino-acid chain; its full sequence is Large subunit GTPase 1 homolog (653 aa).

The interval 1 to 47 (MGKKRGTGLGRSLQRQRGSERRGASSWLHASEVVGESGPERRSAVEQ) is disordered. Residues 155 to 439 (WRQLWRVIER…LCDCPGLVMP (285 aa)) form the CP-type G domain. A GTP-binding site is contributed by 203–206 (NKAD). Acidic residues predominate over residues 248–275 (ADSVADDLSDSEEESSSQEEDVTAEDSA). Positions 248-323 (ADSVADDLSD…TCSEDEGGDK (76 aa)) are disordered. Residues 276–291 (ESTSTGSALQTENQCL) are compositionally biased toward polar residues. The segment covering 293 to 320 (SDDDSSDEYEDCEDEEEDDWQTCSEDEG) has biased composition (acidic residues). GTP-binding positions include 388–395 (GYPNVGKS) and 432–435 (DCPG). The disordered stretch occupies residues 621–653 (APSAGSVVGKPWKKHGNRNKKEKVRRITKHLEN). Over residues 631–653 (PWKKHGNRNKKEKVRRITKHLEN) the composition is skewed to basic residues.

It belongs to the TRAFAC class YlqF/YawG GTPase family. LSG1 subfamily.

The protein localises to the cytoplasm. It is found in the endoplasmic reticulum. The protein resides in the nucleus. It localises to the cajal body. It carries out the reaction GTP + H2O = GDP + phosphate + H(+). In terms of biological role, GTPase required for the XPO1/CRM1-mediated nuclear export of the 60S ribosomal subunit. Probably acts by mediating the release of NMD3 from the 60S ribosomal subunit after export into the cytoplasm. Functions as a GTPase. May act by mediating the release of NMD3 from the 60S ribosomal subunit after export into the cytoplasm during the 60S ribosomal subunit maturation. This is Large subunit GTPase 1 homolog from Gallus gallus (Chicken).